Reading from the N-terminus, the 163-residue chain is Nucleotide-binding protein CGSHiGG_08790 (163 aa).

Belongs to the YajQ family.

Nucleotide-binding protein. This Haemophilus influenzae (strain PittGG) protein is Nucleotide-binding protein CGSHiGG_08790.